The following is a 751-amino-acid chain: Catalase-peroxidase (751 aa).

The interval 1 to 21 (MSNESKCPFHQTAGGGTTNRD) is disordered. Positions 90-244 (WHSAGTYRIG…LAAVQMGLIY (155 aa)) form a cross-link, tryptophyl-tyrosyl-methioninium (Trp-Tyr) (with M-270). The Proton acceptor role is filled by His-91. The disordered stretch occupies residues 195–227 (YGKDQVKAQPPGQGDLVAEPAKHGEEQNRDLSA). The span at 214-227 (PAKHGEEQNRDLSA) shows a compositional bias: basic and acidic residues. A cross-link (tryptophyl-tyrosyl-methioninium (Tyr-Met) (with W-90)) is located at residues 244 to 270 (YVNPEGPEGNPDPVASGKDIRETFGRM). His-285 is a binding site for heme b. Positions 365–387 (AHQWRPKEGKGAGTVPDAHDPGK) are disordered.

The protein belongs to the peroxidase family. Peroxidase/catalase subfamily. In terms of assembly, homodimer or homotetramer. It depends on heme b as a cofactor. Post-translationally, formation of the three residue Trp-Tyr-Met cross-link is important for the catalase, but not the peroxidase activity of the enzyme.

The catalysed reaction is H2O2 + AH2 = A + 2 H2O. It catalyses the reaction 2 H2O2 = O2 + 2 H2O. Its function is as follows. Bifunctional enzyme with both catalase and broad-spectrum peroxidase activity. The sequence is that of Catalase-peroxidase from Pseudomonas putida (strain ATCC 700007 / DSM 6899 / JCM 31910 / BCRC 17059 / LMG 24140 / F1).